A 208-amino-acid polypeptide reads, in one-letter code: ATP-dependent Clp protease proteolytic subunit 1 (208 aa).

The active-site Nucleophile is Ser108. His133 is a catalytic residue.

The protein belongs to the peptidase S14 family. As to quaternary structure, fourteen ClpP subunits assemble into 2 heptameric rings which stack back to back to give a disk-like structure with a central cavity, resembling the structure of eukaryotic proteasomes.

Its subcellular location is the cytoplasm. It carries out the reaction Hydrolysis of proteins to small peptides in the presence of ATP and magnesium. alpha-casein is the usual test substrate. In the absence of ATP, only oligopeptides shorter than five residues are hydrolyzed (such as succinyl-Leu-Tyr-|-NHMec, and Leu-Tyr-Leu-|-Tyr-Trp, in which cleavage of the -Tyr-|-Leu- and -Tyr-|-Trp bonds also occurs).. Cleaves peptides in various proteins in a process that requires ATP hydrolysis. Has a chymotrypsin-like activity. Plays a major role in the degradation of misfolded proteins. This Corynebacterium glutamicum (strain ATCC 13032 / DSM 20300 / JCM 1318 / BCRC 11384 / CCUG 27702 / LMG 3730 / NBRC 12168 / NCIMB 10025 / NRRL B-2784 / 534) protein is ATP-dependent Clp protease proteolytic subunit 1.